Consider the following 147-residue polypeptide: MTIKVHHLRPAPGAKTTKTRVGRGEGSKGKTAGRGTKGSKARKNISAAFEGGQMPIHMRLPKMKGFKNKFKVTFQVVNLERLAELFPNGGQVGPAELVDAGAVRKGQPVKVLGTGDLGGVTLQVSAHAFSASAKEKITAAGGSITEL.

The interval 1 to 42 (MTIKVHHLRPAPGAKTTKTRVGRGEGSKGKTAGRGTKGSKAR) is disordered.

The protein belongs to the universal ribosomal protein uL15 family. Part of the 50S ribosomal subunit.

Its function is as follows. Binds to the 23S rRNA. This chain is Large ribosomal subunit protein uL15, found in Salinispora tropica (strain ATCC BAA-916 / DSM 44818 / JCM 13857 / NBRC 105044 / CNB-440).